The primary structure comprises 523 residues: MDSSKRHLLLILDGWGLADDPSVSAVEQADTPFVDHLYDEYPHGVLKASGLEVGLPDGQMGNSEVGHTNLGAGRVVYQEILRISKAIEDGSFFENDALVRAARHAKASDQKLHLMGCFSDGGVHSHLEHLYGLLELARREGLAPAQVNVHAFTDGRDTDPHGGVDYVEQFQKKADEIGVGRLASIVGRYYAMDRDERWARTERAYRLLTDGTGAAFDDPVTALKASYDDGVTDEFVEPRRIRADDADAFGDHGTRIEDGDAVVYYNFRSDRARQLTRAFTEADFDGFERERPDDLLFVTMSPYDDEFDLPVAFEKLNLEGTLGEVLSARGGRQLRAAETEKYAHVTYFFSGGREAPFDGEDRVLVPSPKVDTYDQQPEMSAPELADRVSRSLREADYTLAVLNFANPDMVGHTGDFEAAVAACEAVDRGARQVVEAARDQGYSVSIIADHGNADRLQNPDGSPHTAHTTALVPHIILKDGFEGPVRDGKLGDVAPTILTLLGEDVPDAMDGEVLVPAERAAAS.

Aspartate 13 and serine 63 together coordinate Mn(2+). Serine 63 serves as the catalytic Phosphoserine intermediate. Substrate is bound by residues histidine 124, 156-157, arginine 188, arginine 194, 268-271, and lysine 341; these read RD and RSDR. Residues aspartate 408, histidine 412, aspartate 449, histidine 450, and histidine 467 each contribute to the Mn(2+) site.

It belongs to the BPG-independent phosphoglycerate mutase family. In terms of assembly, monomer. Mn(2+) serves as cofactor.

The enzyme catalyses (2R)-2-phosphoglycerate = (2R)-3-phosphoglycerate. Its pathway is carbohydrate degradation; glycolysis; pyruvate from D-glyceraldehyde 3-phosphate: step 3/5. In terms of biological role, catalyzes the interconversion of 2-phosphoglycerate and 3-phosphoglycerate. The protein is 2,3-bisphosphoglycerate-independent phosphoglycerate mutase of Salinibacter ruber (strain DSM 13855 / M31).